The sequence spans 257 residues: MVKPTQAKRYASLGAIALLTTSLVVASPNPALAMHISEGFLPLGWAVGWWLAFLPFLAWGLWSLQQQIKQHSESVLLVALAGAYAFVVSSLKIPSVTGSCSHPIGIALGAILFRPPLMAVLGTLVLLFQSLLIAHGGLTTLGANAFSMAVVGPWLAWLTYCGVSRLRVKPAIALFAASFISNVGTYTLTSLQLALAFPDSVGGLATSFAKFGTLFAVTQIPLAISEGLLTVLVWNWLTTYCVAELQALRLLPQEELP.

Positions 1 to 33 (MVKPTQAKRYASLGAIALLTTSLVVASPNPALA) are cleaved as a signal peptide. The next 6 membrane-spanning stretches (helical) occupy residues 39 to 59 (GFLP…FLAW), 74 to 94 (SVLL…LKIP), 117 to 137 (LMAV…AHGG), 138 to 158 (LTTL…LAWL), 171 to 191 (AIAL…LTSL), and 214 to 234 (LFAV…VLVW).

This sequence belongs to the CbiM family. As to quaternary structure, forms an energy-coupling factor (ECF) transporter complex composed of an ATP-binding protein (A component, CbiO), a transmembrane protein (T component, CbiQ) and 2 possible substrate-capture proteins (S components, CbiM and CbiN) of unknown stoichimetry.

It localises to the cell inner membrane. The protein operates within cofactor biosynthesis; adenosylcobalamin biosynthesis. Functionally, part of the energy-coupling factor (ECF) transporter complex CbiMNOQ involved in cobalt import. The chain is Cobalt transport protein CbiM from Thermosynechococcus vestitus (strain NIES-2133 / IAM M-273 / BP-1).